Consider the following 202-residue polypeptide: Protein-methionine-sulfoxide reductase heme-binding subunit MsrQ (202 aa).

Helical transmembrane passes span 8-28, 42-62, 75-95, 110-130, 147-167, and 169-189; these read LAVFLGALAVPAWWLYQAWIF, LGLGALVLLLLTLAMTPLQKL, LGLWCFTYVLLHLSAYCVFIL, PYIIVGMLGFVCLFLLAITSN, LVYLILGLGLLHMLWVVRADL, and EWTLYAVVGASLMLLRLPSIA.

Belongs to the MsrQ family. In terms of assembly, heterodimer of a catalytic subunit (MsrP) and a heme-binding subunit (MsrQ). FMN is required as a cofactor. Heme b serves as cofactor.

The protein resides in the cell inner membrane. Part of the MsrPQ system that repairs oxidized periplasmic proteins containing methionine sulfoxide residues (Met-O), using respiratory chain electrons. Thus protects these proteins from oxidative-stress damage caused by reactive species of oxygen and chlorine generated by the host defense mechanisms. MsrPQ is essential for the maintenance of envelope integrity under bleach stress, rescuing a wide series of structurally unrelated periplasmic proteins from methionine oxidation. MsrQ provides electrons for reduction to the reductase catalytic subunit MsrP, using the quinone pool of the respiratory chain. The polypeptide is Protein-methionine-sulfoxide reductase heme-binding subunit MsrQ (Pseudomonas aeruginosa (strain UCBPP-PA14)).